The sequence spans 278 residues: Protein mtd-1 (278 aa).

An N-terminal signal peptide occupies residues 1 to 17 (MRSSLLLLVFFLSIGWA). The Extracellular portion of the chain corresponds to 18–254 (RYCVHNEKSW…EMLEEIEARK (237 aa)). N-linked (GlcNAc...) asparagine glycosylation is found at N40, N73, N163, and N190. Residues 255–271 (VPVDSSAPVNIILSIAF) traverse the membrane as a helical segment. Residues 272 to 278 (SIFLIHF) are Cytoplasmic-facing.

It localises to the cell membrane. In terms of biological role, plays a role in mechanosensory transduction (touch sensitivity). The chain is Protein mtd-1 from Caenorhabditis elegans.